Consider the following 147-residue polypeptide: Large ribosomal subunit protein bL9 (147 aa).

A disordered region spans residues T40–Q60. A compositionally biased stretch (basic and acidic residues) spans K45–K59.

The protein belongs to the bacterial ribosomal protein bL9 family.

Its function is as follows. Binds to the 23S rRNA. In Exiguobacterium sibiricum (strain DSM 17290 / CCUG 55495 / CIP 109462 / JCM 13490 / 255-15), this protein is Large ribosomal subunit protein bL9.